The chain runs to 225 residues: Uracil-DNA glycosylase (225 aa).

Asp-68 (proton acceptor) is an active-site residue.

This sequence belongs to the uracil-DNA glycosylase (UDG) superfamily. UNG family.

The protein localises to the cytoplasm. It catalyses the reaction Hydrolyzes single-stranded DNA or mismatched double-stranded DNA and polynucleotides, releasing free uracil.. Excises uracil residues from the DNA which can arise as a result of misincorporation of dUMP residues by DNA polymerase or due to deamination of cytosine. This chain is Uracil-DNA glycosylase, found in Mycolicibacterium gilvum (strain PYR-GCK) (Mycobacterium gilvum (strain PYR-GCK)).